Here is a 467-residue protein sequence, read N- to C-terminus: Translation initiation factor eIF2B subunit delta (467 aa).

A disordered region spans residues 1 to 106 (MGFSAEQAKK…QNPQNSPETD (106 aa)). 4 positions are modified to phosphoserine: serine 16, serine 19, serine 21, and serine 23. Positions 16 to 37 (SPVSESSSVGGTSPATASSVVS) are enriched in polar residues. Threonine 27 bears the Phosphothreonine mark. A phosphoserine mark is found at serine 28 and serine 37. The span at 51 to 61 (LKKARKQASRR) shows a compositional bias: basic residues. Residues 84–102 (PNKNSNQQKKASKQNPQNS) show a composition bias toward low complexity.

It belongs to the eIF-2B alpha/beta/delta subunits family. In terms of assembly, component of the translation initiation factor 2B (eIF2B) complex which is a heterodecamer of two sets of five different subunits: alpha, beta, gamma, delta and epsilon. Subunits alpha, beta and delta comprise a regulatory subcomplex and subunits epsilon and gamma comprise a catalytic subcomplex. Within the complex, the hexameric regulatory complex resides at the center, with the two heterodimeric catalytic subcomplexes bound on opposite sides.

It localises to the cytoplasm. Its subcellular location is the cytosol. In terms of biological role, acts as a component of the translation initiation factor 2B (eIF2B) complex, which catalyzes the exchange of GDP for GTP on the eukaryotic initiation factor 2 (eIF2) complex gamma subunit. Its guanine nucleotide exchange factor activity is repressed when bound to eIF2 complex phosphorylated on the alpha subunit, thereby limiting the amount of methionyl-initiator methionine tRNA available to the ribosome and consequently global translation is repressed. This chain is Translation initiation factor eIF2B subunit delta (tif224), found in Schizosaccharomyces pombe (strain 972 / ATCC 24843) (Fission yeast).